The primary structure comprises 192 residues: EF-hand protein 5 (192 aa).

The disordered stretch occupies residues 1 to 36 (MKDKAPVSSQQDHFSRGGAVGGKPISDVRGTSRPFY). EF-hand domains lie at 46 to 80 (AELA…GLHL), 81 to 118 (SDEE…EVDD), 119 to 154 (TMLE…GGEC), and 155 to 190 (STPE…HRLN). Ca(2+)-binding residues include Thr100, Glu102, Asp107, Asp132, and Thr136.

The protein is EF-hand protein 5 of Trypanosoma brucei brucei.